The chain runs to 691 residues: DNA ligase (691 aa).

NAD(+) is bound by residues 41–45 (DAEYD), 90–91 (SL), and Glu130. The active-site N6-AMP-lysine intermediate is the Lys132. Arg153, Glu190, Lys307, and Lys331 together coordinate NAD(+). Residues Cys425, Cys428, Cys443, and Cys449 each contribute to the Zn(2+) site. A BRCT domain is found at 610–691 (APQGVLAGKT…LHQLLEGNTP (82 aa)).

It belongs to the NAD-dependent DNA ligase family. LigA subfamily. Mg(2+) serves as cofactor. It depends on Mn(2+) as a cofactor.

It catalyses the reaction NAD(+) + (deoxyribonucleotide)n-3'-hydroxyl + 5'-phospho-(deoxyribonucleotide)m = (deoxyribonucleotide)n+m + AMP + beta-nicotinamide D-nucleotide.. Its function is as follows. DNA ligase that catalyzes the formation of phosphodiester linkages between 5'-phosphoryl and 3'-hydroxyl groups in double-stranded DNA using NAD as a coenzyme and as the energy source for the reaction. It is essential for DNA replication and repair of damaged DNA. The chain is DNA ligase from Burkholderia cenocepacia (strain HI2424).